A 457-amino-acid polypeptide reads, in one-letter code: Argininosuccinate lyase (457 aa).

The protein belongs to the lyase 1 family. Argininosuccinate lyase subfamily.

The protein resides in the cytoplasm. The catalysed reaction is 2-(N(omega)-L-arginino)succinate = fumarate + L-arginine. It participates in amino-acid biosynthesis; L-arginine biosynthesis; L-arginine from L-ornithine and carbamoyl phosphate: step 3/3. The protein is Argininosuccinate lyase of Yersinia pseudotuberculosis serotype O:1b (strain IP 31758).